The following is a 263-amino-acid chain: Endonuclease 8 (263 aa).

Catalysis depends on Pro2, which acts as the Schiff-base intermediate with DNA. The active-site Proton donor is the Glu3. Residue Lys53 is the Proton donor; for beta-elimination activity of the active site. DNA is bound by residues Gln70, Arg125, and Asn169. The FPG-type zinc-finger motif lies at 229-263 (KVFHRDGELCERCGGIIEKTTLSSRPFYWCPGCQH). Arg253 functions as the Proton donor; for delta-elimination activity in the catalytic mechanism.

This sequence belongs to the FPG family. It depends on Zn(2+) as a cofactor.

It carries out the reaction 2'-deoxyribonucleotide-(2'-deoxyribose 5'-phosphate)-2'-deoxyribonucleotide-DNA = a 3'-end 2'-deoxyribonucleotide-(2,3-dehydro-2,3-deoxyribose 5'-phosphate)-DNA + a 5'-end 5'-phospho-2'-deoxyribonucleoside-DNA + H(+). Functionally, involved in base excision repair of DNA damaged by oxidation or by mutagenic agents. Acts as a DNA glycosylase that recognizes and removes damaged bases. Has a preference for oxidized pyrimidines, such as thymine glycol, 5,6-dihydrouracil and 5,6-dihydrothymine. Has AP (apurinic/apyrimidinic) lyase activity and introduces nicks in the DNA strand. Cleaves the DNA backbone by beta-delta elimination to generate a single-strand break at the site of the removed base with both 3'- and 5'-phosphates. This is Endonuclease 8 from Shigella dysenteriae serotype 1 (strain Sd197).